The chain runs to 512 residues: MQQPVVRVGEWLVTPSINQISRNGRQLTLEPRLIDLLVFFAQHSGEVLSRDELIDNVWKRSIVTNHVVTQSISELRKSLKDNDEDSPVYIATVPKRGYKLMVPVIWYSEEEGEEIMLSSPPPIPEAVPATDSPSHSLNIQNTATPPEQSPVKSKRFTTFWVWFFFLLSLGICVALVAFSSLDTRLPMSKSRILLNPRDIDINMVNKSCNSWSSPYQLSYAIGVGDLVATSLNTFSTFMVHDKINYNIDEPSSSGKTLSIAFVNQRQYRAQQCFMSIKLVDNADGSTMLDKRYVITNGNQLAIQNDLLESLSKALNQPWPQRMQETLQKILPHRGALLTNFYQAHDYLLHGDDKSLNRASELLGEIVQSSPEFTYARAEKALVDIVRHSQHPLDEKQLAALNTEIDNIVTLPELNNLSIIYQIKAVSALVKGKTDESYQAINTGIDLEMSWLNYVLLGKVYEMKGMNREAADAYLTAFNLRPGANTLYWIENGIFQTSVPYVVPYLDKFLASE.

Residues 1 to 154 lie on the Cytoplasmic side of the membrane; the sequence is MQQPVVRVGE…PPEQSPVKSK (154 aa). A DNA-binding region (ompR/PhoB-type) is located at residues 3-102; the sequence is QPVVRVGEWL…VPKRGYKLMV (100 aa). A helical membrane pass occupies residues 155 to 180; sequence RFTTFWVWFFFLLSLGICVALVAFSS. Residues 181-512 lie on the Periplasmic side of the membrane; the sequence is LDTRLPMSKS…PYLDKFLASE (332 aa). Residues Cys208 and Cys272 are joined by a disulfide bond.

In terms of assembly, homodimer. Dimerization of the periplasmic domain is required for activation of the cadBA operon. Interacts strongly with the lysine permease LysP in the absence of lysine or at low lysine concentrations. Interaction is markedly attenuated under increasing lysine levels. Concomitant pH-dependent protonation of periplasmic amino acids in both proteins dissolves their electrostatic connections resulting in further destabilization of the CadC/LysP interaction. Contains a functionally important disulfide bond, which may provide structural support for the pH-dependent activation via a switch of the sensor between the inactive and active state.

It localises to the cell inner membrane. With respect to regulation, activation of CadC requires two stimuli, lysine and low pH. CadC shows an extremely low affinity for lysine, and it senses the extracellular lysine not directly but indirectly via interaction with the lysine permease LysP. At a low external lysine concentration, CadC is inactivated by an interaction with LysP. When lysine is abundantly available, the interaction between LysP and CadC is released, and CadC becomes susceptible to activation by low pH. Acidification of the external milieu is sensed by protonation of a patch of acidic amino acids within the periplasmic domain and associated to conformational and/or oligomerization effects. The pH-dependent regulation may be due to the presence/absence of a disulfide bond within the periplasmic domain. At pH 7.6, a disulfide bond is found in the inactive state of CadC. At pH 5.8, disulfide bond formation is prevented, which transforms CadC into a semi-active state with respect to both the pH and the lysine stimuli. Activity is also feedback inhibited by cadaverine. Cadaverine binds first to the central cavity, which putatively triggers intramolecular rearrangements to expose the binding sites for cadaverine at the dimer interface, which inactivates CadC and consequently shuts off transcription of the cadBA operon. Regulates the lysine- and pH-dependent expression of the lysine decarboxylase CadA and the cadaverine-lysine antiporter CadB. At low external pH, and in the presence of external lysine, CadC activates transcription of the cadBA operon by binding directly to two sites, Cad1 and Cad2, within the cadBA promoter region (Pcad). Preferentially binds to AT-rich regions within the Cad1 promoter. The chain is Transcriptional activator CadC (cadC) from Escherichia coli (strain K12).